Reading from the N-terminus, the 399-residue chain is Probable WRKY transcription factor 48 (399 aa).

2 stretches are compositionally biased toward basic and acidic residues: residues 1–11 (MEKKKEEDHHH) and 19–38 (KEIKNTETKIEQEQEQEQKQ). 2 disordered regions span residues 1-57 (MEKK…TSSD) and 138-202 (AESS…KNQK). Over residues 143–161 (VVNTTPTSPNSTSVSSSSN) the composition is skewed to low complexity. The segment covering 162–171 (EAANDNNSGK) has biased composition (polar residues). A compositionally biased stretch (low complexity) spans 184-193 (QQEQKGTKPQ). Positions 215 to 280 (SDIDNLDDGY…YEGQHTHPFP (66 aa)) form a DNA-binding region, WRKY. Residues 361 to 399 (QASTSTSSSIRDHGLLQDILPSQIRSDTINTQTNEENKK) form a disordered region. Over residues 383 to 399 (QIRSDTINTQTNEENKK) the composition is skewed to polar residues.

It is found in the nucleus. In terms of biological role, transcription factor. Interacts specifically with the W box (5'-(T)TGAC[CT]-3'), a frequently occurring elicitor-responsive cis-acting element. The protein is Probable WRKY transcription factor 48 (WRKY48) of Arabidopsis thaliana (Mouse-ear cress).